Consider the following 468-residue polypeptide: ATP synthase subunit beta (468 aa).

148-155 (GGAGVGKT) contributes to the ATP binding site.

Belongs to the ATPase alpha/beta chains family. In terms of assembly, F-type ATPases have 2 components, CF(1) - the catalytic core - and CF(0) - the membrane proton channel. CF(1) has five subunits: alpha(3), beta(3), gamma(1), delta(1), epsilon(1). CF(0) has three main subunits: a(1), b(2) and c(9-12). The alpha and beta chains form an alternating ring which encloses part of the gamma chain. CF(1) is attached to CF(0) by a central stalk formed by the gamma and epsilon chains, while a peripheral stalk is formed by the delta and b chains.

The protein localises to the cell membrane. It catalyses the reaction ATP + H2O + 4 H(+)(in) = ADP + phosphate + 5 H(+)(out). Its function is as follows. Produces ATP from ADP in the presence of a proton gradient across the membrane. The catalytic sites are hosted primarily by the beta subunits. This chain is ATP synthase subunit beta, found in Stenotrophomonas maltophilia (strain K279a).